A 515-amino-acid chain; its full sequence is Fatty acyl-CoA reductase 2 (515 aa).

At 1–464 (MSMIAAFYSN…KAKQHLRRLR (464 aa)) the chain is on the cytoplasmic side. The helical transmembrane segment at 465–484 (NIHYLFNTALFLIIWRLLIA) threads the bilayer. Topologically, residues 485–515 (RSQMARNVWFFIVSFCYKFISYFRASSTLKV) are peroxisomal.

It belongs to the fatty acyl-CoA reductase family. As to expression, specifically expressed in the meibomian glands of the eyelid and the sebaceous glands of the skin. Also expressed in the brain where large quantities of ether lipids are synthesized.

The protein resides in the peroxisome membrane. The catalysed reaction is a long-chain fatty acyl-CoA + 2 NADPH + 2 H(+) = a long-chain primary fatty alcohol + 2 NADP(+) + CoA. It catalyses the reaction hexadecanoyl-CoA + 2 NADPH + 2 H(+) = hexadecan-1-ol + 2 NADP(+) + CoA. It carries out the reaction octadecanoyl-CoA + 2 NADPH + 2 H(+) = octadecan-1-ol + 2 NADP(+) + CoA. The enzyme catalyses a very long-chain fatty acyl-CoA + 2 NADPH + 2 H(+) = a very long-chain primary fatty alcohol + 2 NADP(+) + CoA. The catalysed reaction is an ultra-long-chain fatty acyl-CoA + 2 NADPH + 2 H(+) = an ultra long-chain primary fatty alcohol + 2 NADP(+) + CoA. It catalyses the reaction eicosanoyl-CoA + 2 NADPH + 2 H(+) = eicosan-1-ol + 2 NADP(+) + CoA. It carries out the reaction docosanoyl-CoA + 2 NADPH + 2 H(+) = docosan-1-ol + 2 NADP(+) + CoA. The enzyme catalyses tetracosanoyl-CoA + 2 NADPH + 2 H(+) = tetracosan-1-ol + 2 NADP(+) + CoA. The catalysed reaction is hexacosanoyl-CoA + 2 NADPH + 2 H(+) = hexacosan-1-ol + 2 NADP(+) + CoA. It catalyses the reaction octacosanoyl-CoA + 2 NADPH + 2 H(+) = octacosan-1-ol + 2 NADP(+) + CoA. It carries out the reaction triacontanoyl-CoA + 2 NADPH + 2 H(+) = triacontan-1-ol + 2 NADP(+) + CoA. The enzyme catalyses 18-methylnonadecanoyl-CoA + 2 NADPH + 2 H(+) = 18-methylnonadecan-1-ol + 2 NADP(+) + CoA. The catalysed reaction is 20-methylheneicosanoyl-CoA + 2 NADPH + 2 H(+) = 20-methylheneicosan-1-ol + 2 NADP(+) + CoA. It catalyses the reaction 22-methyltricosanoyl-CoA + 2 NADPH + 2 H(+) = 22-methyltricosan-1-ol + 2 NADP(+) + CoA. It carries out the reaction 24-methylpentacosanoyl-CoA + 2 NADPH + 2 H(+) = 24-methylpentacosan-1-ol + 2 NADP(+) + CoA. In terms of biological role, catalyzes the reduction of saturated but not unsaturated C16 or C18 fatty acyl-CoA to fatty alcohols. A lower activity can be observed with shorter fatty acyl-CoA substrates. Can produce very long-chain and ultra long-chain FAls, regardless of whether they have a straight or branched chain. It may play a role in the production of ether lipids/plasmalogens and wax monoesters which synthesis requires fatty alcohols as substrates. The sequence is that of Fatty acyl-CoA reductase 2 from Mus musculus (Mouse).